The sequence spans 699 residues: Elongation factor G 2 (699 aa).

One can recognise a tr-type G domain in the interval 8 to 290 (ERYRNIGICA…AVIEYLPSPT (283 aa)). Residues 17-24 (AHVDAGKT), 88-92 (DTPGH), and 142-145 (NKMD) contribute to the GTP site.

This sequence belongs to the TRAFAC class translation factor GTPase superfamily. Classic translation factor GTPase family. EF-G/EF-2 subfamily.

It is found in the cytoplasm. Its function is as follows. Catalyzes the GTP-dependent ribosomal translocation step during translation elongation. During this step, the ribosome changes from the pre-translocational (PRE) to the post-translocational (POST) state as the newly formed A-site-bound peptidyl-tRNA and P-site-bound deacylated tRNA move to the P and E sites, respectively. Catalyzes the coordinated movement of the two tRNA molecules, the mRNA and conformational changes in the ribosome. The sequence is that of Elongation factor G 2 from Colwellia psychrerythraea (strain 34H / ATCC BAA-681) (Vibrio psychroerythus).